The sequence spans 223 residues: Ribose-5-phosphate isomerase A (223 aa).

Substrate-binding positions include 26-29 (TGST), 82-85 (DGAD), and 95-98 (KGGG). The Proton acceptor role is filled by Glu-104. Residue Lys-122 coordinates substrate.

It belongs to the ribose 5-phosphate isomerase family. In terms of assembly, homodimer.

The enzyme catalyses aldehydo-D-ribose 5-phosphate = D-ribulose 5-phosphate. Its pathway is carbohydrate degradation; pentose phosphate pathway; D-ribose 5-phosphate from D-ribulose 5-phosphate (non-oxidative stage): step 1/1. Its function is as follows. Catalyzes the reversible conversion of ribose-5-phosphate to ribulose 5-phosphate. The sequence is that of Ribose-5-phosphate isomerase A from Streptococcus agalactiae serotype V (strain ATCC BAA-611 / 2603 V/R).